The sequence spans 1058 residues: Carbamoyl phosphate synthase large chain (1058 aa).

The carboxyphosphate synthetic domain stretch occupies residues 1–401; sequence MPKRKDIQKI…SLLKACRSLE (401 aa). Residues Arg129, Arg169, Gly175, Gly176, Arg208, Ile210, Glu215, Gly241, Ile242, His243, Gln284, and Glu298 each coordinate ATP. Positions 133–327 constitute an ATP-grasp 1 domain; that stretch reads KQLMQELDQP…IAKLAAKIAV (195 aa). Mg(2+) contacts are provided by Gln284, Glu298, and Asn300. Mn(2+) is bound by residues Gln284, Glu298, and Asn300. The tract at residues 402-546 is oligomerization domain; sequence IGVCHNEMTS…YSTYELENES (145 aa). Residues 547 to 929 form a carbamoyl phosphate synthetic domain region; sequence VQSNKESILV…ALYKAFEANN (383 aa). In terms of domain architecture, ATP-grasp 2 spans 671–861; that stretch reads EKALKELGIP…MAQIATKLIL (191 aa). ATP is bound by residues Arg707, Ser746, Ile748, Glu752, Gly777, Val778, His779, Ser780, Gln820, and Glu832. Residues Gln820, Glu832, and Asn834 each contribute to the Mg(2+) site. Positions 820, 832, and 834 each coordinate Mn(2+). The MGS-like domain occupies 930–1058; that stretch reads SHLSEFGQIV…ESRCFNIEAI (129 aa). The allosteric domain stretch occupies residues 930-1058; sequence SHLSEFGQIV…ESRCFNIEAI (129 aa).

It belongs to the CarB family. As to quaternary structure, composed of two chains; the small (or glutamine) chain promotes the hydrolysis of glutamine to ammonia, which is used by the large (or ammonia) chain to synthesize carbamoyl phosphate. Tetramer of heterodimers (alpha,beta)4. Mg(2+) is required as a cofactor. Requires Mn(2+) as cofactor.

It catalyses the reaction hydrogencarbonate + L-glutamine + 2 ATP + H2O = carbamoyl phosphate + L-glutamate + 2 ADP + phosphate + 2 H(+). The catalysed reaction is hydrogencarbonate + NH4(+) + 2 ATP = carbamoyl phosphate + 2 ADP + phosphate + 2 H(+). It participates in amino-acid biosynthesis; L-arginine biosynthesis; carbamoyl phosphate from bicarbonate: step 1/1. It functions in the pathway pyrimidine metabolism; UMP biosynthesis via de novo pathway; (S)-dihydroorotate from bicarbonate: step 1/3. Its function is as follows. Large subunit of the glutamine-dependent carbamoyl phosphate synthetase (CPSase). CPSase catalyzes the formation of carbamoyl phosphate from the ammonia moiety of glutamine, carbonate, and phosphate donated by ATP, constituting the first step of 2 biosynthetic pathways, one leading to arginine and/or urea and the other to pyrimidine nucleotides. The large subunit (synthetase) binds the substrates ammonia (free or transferred from glutamine from the small subunit), hydrogencarbonate and ATP and carries out an ATP-coupled ligase reaction, activating hydrogencarbonate by forming carboxy phosphate which reacts with ammonia to form carbamoyl phosphate. This Streptococcus pyogenes serotype M49 (strain NZ131) protein is Carbamoyl phosphate synthase large chain.